The primary structure comprises 482 residues: tRNA modification GTPase MnmE (482 aa).

Residues Arg25, Glu82, and Lys135 each coordinate (6S)-5-formyl-5,6,7,8-tetrahydrofolate. The TrmE-type G domain occupies 231–404 (GIKVVIAGQP…LRRVLLDIAG (174 aa)). Asn241 serves as a coordination point for K(+). Residues 241–246 (NAGKSS), 260–266 (TPIAGTT), 285–288 (DTAG), and 385–387 (SAR) each bind GTP. Ser245 contributes to the Mg(2+) binding site. Thr260, Ile262, and Thr265 together coordinate K(+). Thr266 contacts Mg(2+). Lys482 contributes to the (6S)-5-formyl-5,6,7,8-tetrahydrofolate binding site.

Belongs to the TRAFAC class TrmE-Era-EngA-EngB-Septin-like GTPase superfamily. TrmE GTPase family. In terms of assembly, homodimer. Heterotetramer of two MnmE and two MnmG subunits. Requires K(+) as cofactor.

The protein localises to the cytoplasm. Exhibits a very high intrinsic GTPase hydrolysis rate. Involved in the addition of a carboxymethylaminomethyl (cmnm) group at the wobble position (U34) of certain tRNAs, forming tRNA-cmnm(5)s(2)U34. This Paracidovorax citrulli (strain AAC00-1) (Acidovorax citrulli) protein is tRNA modification GTPase MnmE.